Reading from the N-terminus, the 593-residue chain is Aspartate--tRNA(Asp/Asn) ligase (593 aa).

Glu-173 lines the L-aspartate pocket. The segment at 197-200 (QLFK) is aspartate. Arg-219 provides a ligand contact to L-aspartate. ATP contacts are provided by residues 219-221 (RDE) and Gln-228. His-451 contacts L-aspartate. ATP is bound at residue Glu-485. Residue Arg-492 participates in L-aspartate binding. 537 to 540 (GIDR) serves as a coordination point for ATP.

It belongs to the class-II aminoacyl-tRNA synthetase family. Type 1 subfamily. In terms of assembly, homodimer.

The protein localises to the cytoplasm. It carries out the reaction tRNA(Asx) + L-aspartate + ATP = L-aspartyl-tRNA(Asx) + AMP + diphosphate. In terms of biological role, aspartyl-tRNA synthetase with relaxed tRNA specificity since it is able to aspartylate not only its cognate tRNA(Asp) but also tRNA(Asn). Reaction proceeds in two steps: L-aspartate is first activated by ATP to form Asp-AMP and then transferred to the acceptor end of tRNA(Asp/Asn). The protein is Aspartate--tRNA(Asp/Asn) ligase of Legionella pneumophila (strain Paris).